A 273-amino-acid chain; its full sequence is Tryptophan synthase alpha chain (273 aa).

Catalysis depends on proton acceptor residues Glu56 and Asp67.

It belongs to the TrpA family. As to quaternary structure, tetramer of two alpha and two beta chains.

The enzyme catalyses (1S,2R)-1-C-(indol-3-yl)glycerol 3-phosphate + L-serine = D-glyceraldehyde 3-phosphate + L-tryptophan + H2O. The protein operates within amino-acid biosynthesis; L-tryptophan biosynthesis; L-tryptophan from chorismate: step 5/5. In terms of biological role, the alpha subunit is responsible for the aldol cleavage of indoleglycerol phosphate to indole and glyceraldehyde 3-phosphate. The sequence is that of Tryptophan synthase alpha chain from Shewanella baltica (strain OS155 / ATCC BAA-1091).